A 389-amino-acid polypeptide reads, in one-letter code: Pyruvate synthase subunit PorA (389 aa).

As to quaternary structure, heterotetramer of one alpha, one beta, one delta and one gamma chain.

It carries out the reaction 2 oxidized [2Fe-2S]-[ferredoxin] + pyruvate + CoA = 2 reduced [2Fe-2S]-[ferredoxin] + acetyl-CoA + CO2 + H(+). This Methanocaldococcus jannaschii (strain ATCC 43067 / DSM 2661 / JAL-1 / JCM 10045 / NBRC 100440) (Methanococcus jannaschii) protein is Pyruvate synthase subunit PorA (porA).